Reading from the N-terminus, the 310-residue chain is tRNA dimethylallyltransferase (310 aa).

13–20 (GPTASGKT) serves as a coordination point for ATP. 15–20 (TASGKT) provides a ligand contact to substrate. Interaction with substrate tRNA stretches follow at residues 38–41 (DSAL), 162–166 (QRLSR), 243–248 (RCVGYR), and 276–283 (KRQITWLR).

It belongs to the IPP transferase family. Monomer. Mg(2+) serves as cofactor.

The enzyme catalyses adenosine(37) in tRNA + dimethylallyl diphosphate = N(6)-dimethylallyladenosine(37) in tRNA + diphosphate. Functionally, catalyzes the transfer of a dimethylallyl group onto the adenine at position 37 in tRNAs that read codons beginning with uridine, leading to the formation of N6-(dimethylallyl)adenosine (i(6)A). This chain is tRNA dimethylallyltransferase, found in Vibrio parahaemolyticus serotype O3:K6 (strain RIMD 2210633).